Consider the following 132-residue polypeptide: uncharacterized protein (132 aa).

A run of 4 helical transmembrane segments spans residues 15–37 (FPEY…LLLY), 49–71 (AFIP…LRLF), 81–103 (VILT…LALV), and 110–129 (LAAT…MAFV).

It localises to the cell membrane. This is an uncharacterized protein from Archaeoglobus fulgidus (strain ATCC 49558 / DSM 4304 / JCM 9628 / NBRC 100126 / VC-16).